A 630-amino-acid chain; its full sequence is MNVDLRLIVRLLLAILLTSLVTTILMGKQIHRRLVKSMVKTTGEKDSLPARQLPKREISPKVADFPPPLTLNQTELDILKIQRNNSFRLPQQEAIKEWQDAIFFKEDSNRRGLGEQGRAVQLPNAKLNPDDFQDFYAELSDRIPLNRSLPDTRPISCRKRKYLENLPNVTVIIAFHDEHLSVLLRSITSIINRSPVELLKQIVLVDDDSNLPELGQQLEEIVAQNFPKIIHILRLPERRGSIKARMEAIRVSSCQVLVFLDSHIEVNTNWLPPLLEPIVINPHIVTRPILDAISRKTFAYAKQNTMTRSGFNWWLESESLPIFPEDKSPDSTPYRTPVLSGAMAIDRNYFLNLGGFDEQLDTWEAEKFEISFKVWMCGGMMLYVPCARVGHIGKRPMKSISSPGYHNFLARNYKRVAEVWMDNYKKYVYDKNPKLYKMANAGLLFQRKTKRNALECKTFDWYMTKVAPDFLKRYLALDSPLVFSGVIESVAFPGFCVDSLNCRHTKPVVLARCTGHNSMPGEHQNWSLTQDHEIQLTNSKDDCLEAQGLRSKSVWLFRCHKNGGNQYWYYNHRHRWIQQGQIWVWCLEAQLASGHKVGKVLANKICDKNQLEQQWKVGRNAPYDPQREPH.

Residues 1 to 6 are Cytoplasmic-facing; it reads MNVDLR. Residues 7–26 form a helical; Signal-anchor for type II membrane protein membrane-spanning segment; sequence LIVRLLLAILLTSLVTTILM. Residues 27–630 are Lumenal-facing; it reads GKQIHRRLVK…APYDPQREPH (604 aa). Asn72, Asn84, Asn146, and Asn168 each carry an N-linked (GlcNAc...) asparagine glycan. 3 disulfides stabilise this stretch: Cys157–Cys386, Cys377–Cys456, and Cys496–Cys513. Residues 166-277 form a catalytic subdomain A region; sequence LPNVTVIIAF…TNWLPPLLEP (112 aa). Asp207 and Arg238 together coordinate substrate. Residue Asp261 participates in Mn(2+) binding. Ser262 is a substrate binding site. Residue His263 coordinates Mn(2+). The tract at residues 333–394 is catalytic subdomain B; that stretch reads PYRTPVLSGA…PCARVGHIGK (62 aa). Residue Trp363 participates in substrate binding. Residue His391 participates in Mn(2+) binding. In terms of domain architecture, Ricin B-type lectin spans 483–618; it reads FSGVIESVAF…NQLEQQWKVG (136 aa). An N-linked (GlcNAc...) asparagine glycan is attached at Asn525. 2 disulfides stabilise this stretch: Cys543-Cys559 and Cys586-Cys606.

This sequence belongs to the glycosyltransferase 2 family. GalNAc-T subfamily. Mn(2+) serves as cofactor. As to expression, during embryonic stages 9-11, weakly expressed in the mesoderm. During embryonic stages 12-13, very weak expression is observed in the somatic mesoderm region. No expression detected from stage 14-15. During embryonic stages 16-17, expressed in the epidermis and the antennomaxillary complex. In third instar larvae, expressed ubiquitously in wing, eye-antennal, leg and haltere imaginal disks.

It localises to the golgi apparatus membrane. The enzyme catalyses L-seryl-[protein] + UDP-N-acetyl-alpha-D-galactosamine = a 3-O-[N-acetyl-alpha-D-galactosaminyl]-L-seryl-[protein] + UDP + H(+). The catalysed reaction is L-threonyl-[protein] + UDP-N-acetyl-alpha-D-galactosamine = a 3-O-[N-acetyl-alpha-D-galactosaminyl]-L-threonyl-[protein] + UDP + H(+). Its pathway is protein modification; protein glycosylation. Functionally, may catalyze the initial reaction in O-linked oligosaccharide biosynthesis, the transfer of an N-acetyl-D-galactosamine residue to a serine or threonine residue on the protein receptor. This is Putative polypeptide N-acetylgalactosaminyltransferase 10 (pgant10) from Drosophila melanogaster (Fruit fly).